Reading from the N-terminus, the 510-residue chain is Light-independent protochlorophyllide reductase subunit B (510 aa).

Residue Asp-36 coordinates [4Fe-4S] cluster. The Proton donor role is filled by Asp-296. 431–432 lines the substrate pocket; that stretch reads GM.

Belongs to the ChlB/BchB/BchZ family. As to quaternary structure, protochlorophyllide reductase is composed of three subunits; ChlL, ChlN and ChlB. Forms a heterotetramer of two ChlB and two ChlN subunits. The cofactor is [4Fe-4S] cluster.

Its subcellular location is the plastid. It localises to the chloroplast. The catalysed reaction is chlorophyllide a + oxidized 2[4Fe-4S]-[ferredoxin] + 2 ADP + 2 phosphate = protochlorophyllide a + reduced 2[4Fe-4S]-[ferredoxin] + 2 ATP + 2 H2O. The protein operates within porphyrin-containing compound metabolism; chlorophyll biosynthesis (light-independent). Functionally, component of the dark-operative protochlorophyllide reductase (DPOR) that uses Mg-ATP and reduced ferredoxin to reduce ring D of protochlorophyllide (Pchlide) to form chlorophyllide a (Chlide). This reaction is light-independent. The NB-protein (ChlN-ChlB) is the catalytic component of the complex. This is Light-independent protochlorophyllide reductase subunit B from Chlorokybus atmophyticus (Soil alga).